The following is a 363-amino-acid chain: UDP-N-acetylglucosamine--N-acetylmuramyl-(pentapeptide) pyrophosphoryl-undecaprenol N-acetylglucosamine transferase (363 aa).

UDP-N-acetyl-alpha-D-glucosamine-binding positions include 10–12 (TGG), Asn124, Ser195, Ile250, and Gln295.

Belongs to the glycosyltransferase 28 family. MurG subfamily.

It is found in the cell membrane. It carries out the reaction di-trans,octa-cis-undecaprenyl diphospho-N-acetyl-alpha-D-muramoyl-L-alanyl-D-glutamyl-meso-2,6-diaminopimeloyl-D-alanyl-D-alanine + UDP-N-acetyl-alpha-D-glucosamine = di-trans,octa-cis-undecaprenyl diphospho-[N-acetyl-alpha-D-glucosaminyl-(1-&gt;4)]-N-acetyl-alpha-D-muramoyl-L-alanyl-D-glutamyl-meso-2,6-diaminopimeloyl-D-alanyl-D-alanine + UDP + H(+). It participates in cell wall biogenesis; peptidoglycan biosynthesis. Cell wall formation. Catalyzes the transfer of a GlcNAc subunit on undecaprenyl-pyrophosphoryl-MurNAc-pentapeptide (lipid intermediate I) to form undecaprenyl-pyrophosphoryl-MurNAc-(pentapeptide)GlcNAc (lipid intermediate II). In Listeria welshimeri serovar 6b (strain ATCC 35897 / DSM 20650 / CCUG 15529 / CIP 8149 / NCTC 11857 / SLCC 5334 / V8), this protein is UDP-N-acetylglucosamine--N-acetylmuramyl-(pentapeptide) pyrophosphoryl-undecaprenol N-acetylglucosamine transferase.